Here is a 415-residue protein sequence, read N- to C-terminus: MKSDSEGHKSSSKIQIHKGKILLKPRSWVNLGYSIANSEKETFFLKNAIPGETVDTVLLKRSGSLFWGVASEIQEVSSERISSDCSIFPRCGGCSYRHVSYQKELEIKKFLLQETLEHFLSKKHIQIPEIEILSGDPNGYRNTAQIQLGFAGNQRLAGFYEEFSHSIVNLPEEGCKNLPQEMNFAFAEFLKQEVKGSKQILKSKTLSFRLEGTKVISYKKKSVSFSENIRIPELKKIVWEIPAGGFSQVNRYLIAPWLEKIFELVPNNQNRILELYCGSGLIAIALKSKTTSWLGYEISSDCVQQAKRNVLLNGISSCDFKTLNLETDWIDSEEVLNSSFWIMNPPRAGLSKKVLQTLIKTSPNGFLYSSCNHSTLVRDLSLFLNKDYKLSNVTLVDFFPRTKHFEVIVKVEKKD.

[4Fe-4S] cluster is bound by residues Cys85, Cys91, Cys94, and Cys175. Positions 248, 276, 297, and 344 each coordinate S-adenosyl-L-methionine. Catalysis depends on Cys371, which acts as the Nucleophile.

Belongs to the class I-like SAM-binding methyltransferase superfamily. RNA M5U methyltransferase family.

This is an uncharacterized protein from Leptospira interrogans serogroup Icterohaemorrhagiae serovar copenhageni (strain Fiocruz L1-130).